A 134-amino-acid chain; its full sequence is Phosphoribosyl-AMP cyclohydrolase (134 aa).

Aspartate 78 is a binding site for Mg(2+). Cysteine 79 contributes to the Zn(2+) binding site. Residues aspartate 80 and aspartate 82 each contribute to the Mg(2+) site. Residues cysteine 96 and cysteine 103 each contribute to the Zn(2+) site.

Belongs to the PRA-CH family. In terms of assembly, homodimer. Mg(2+) serves as cofactor. It depends on Zn(2+) as a cofactor.

It is found in the cytoplasm. It carries out the reaction 1-(5-phospho-beta-D-ribosyl)-5'-AMP + H2O = 1-(5-phospho-beta-D-ribosyl)-5-[(5-phospho-beta-D-ribosylamino)methylideneamino]imidazole-4-carboxamide. It participates in amino-acid biosynthesis; L-histidine biosynthesis; L-histidine from 5-phospho-alpha-D-ribose 1-diphosphate: step 3/9. Catalyzes the hydrolysis of the adenine ring of phosphoribosyl-AMP. The protein is Phosphoribosyl-AMP cyclohydrolase of Cupriavidus taiwanensis (strain DSM 17343 / BCRC 17206 / CCUG 44338 / CIP 107171 / LMG 19424 / R1) (Ralstonia taiwanensis (strain LMG 19424)).